The following is a 367-amino-acid chain: Viral cathepsin (367 aa).

The first 25 residues, 1-25, serve as a signal peptide directing secretion; it reads MRKYHSNIMHKIITFVSLLWTFVVC. Positions 26 to 156 are cleaved as a propeptide — activation peptide; the sequence is DEISLHTSSS…IVKGAPDIRL (131 aa). 2 N-linked (GlcNAc...) asparagine; by host glycosylation sites follow: N103 and N135. 3 disulfide bridges follow: C177–C218, C211–C251, and C306–C354. Residue C180 is part of the active site. Active-site residues include H313 and N333.

This sequence belongs to the peptidase C1 family. Post-translationally, synthesized as an inactive proenzyme and activated by proteolytic removal of the inhibitory propeptide.

It carries out the reaction Endopeptidase of broad specificity, hydrolyzing substrates of both cathepsin L and cathepsin B.. Its function is as follows. Cysteine protease that plays an essential role in host liquefaction to facilitate horizontal transmission of the virus. May participate in the degradation of foreign protein expressed by the baculovirus system. The sequence is that of Viral cathepsin (VCATH) from Lepidoptera (butterflies and moths).